The following is a 381-amino-acid chain: Prolargin (381 aa).

A signal peptide spans 1-21 (MRSSLCWLLTLLLILATAAQG). A disordered region spans residues 19-65 (AQGQPTRRPRPRPRPRPRPRLRPTPSFPQPDEPTEPTDLPPPLPPGP). The segment covering 25-39 (RRPRPRPRPRPRPRL) has biased composition (basic residues). A compositionally biased stretch (pro residues) spans 56-65 (DLPPPLPPGP). 12 LRR repeats span residues 94 to 113 (RKVP…NNFI), 114 to 137 (TELP…NNRI), 138 to 161 (RKVD…KNQL), 162 to 182 (EEVP…QNQI), 183 to 206 (SRIP…HNKL), 207 to 232 (SDGV…HNTL), 233 to 253 (RKMP…SNRI), 254 to 277 (EAIP…YNQL), 278 to 302 (SDRG…HNRI), 303 to 322 (SSVP…NNSI), 323 to 361 (EKIN…GNYL), and 362 to 381 (KPPI…SVVI). A glycan (N-linked (GlcNAc...) asparagine) is linked at Asn123. 3 N-linked (GlcNAc...) asparagine glycosylation sites follow: Asn288, Asn319, and Asn326. A disulfide bond links Cys331 and Cys372.

This sequence belongs to the small leucine-rich proteoglycan (SLRP) family. SLRP class II subfamily. As to quaternary structure, binds the basement membrane heparan sulfate proteoglycan perlecan and triple helical collagens type I and type II. Post-translationally, glycosylated; contains heparan sulfate.

It is found in the secreted. Its subcellular location is the extracellular space. It localises to the extracellular matrix. In terms of biological role, may anchor basement membranes to the underlying connective tissue. The sequence is that of Prolargin (PRELP) from Bos taurus (Bovine).